The sequence spans 396 residues: DNA replication and repair protein RecF (396 aa).

Position 30–37 (30–37) interacts with ATP; that stretch reads GANGSGKT.

The protein belongs to the RecF family.

Its subcellular location is the cytoplasm. Functionally, the RecF protein is involved in DNA metabolism; it is required for DNA replication and normal SOS inducibility. RecF binds preferentially to single-stranded, linear DNA. It also seems to bind ATP. The sequence is that of DNA replication and repair protein RecF from Thermomicrobium roseum (strain ATCC 27502 / DSM 5159 / P-2).